The following is a 723-amino-acid chain: Catalase-peroxidase (723 aa).

The tryptophyl-tyrosyl-methioninium (Trp-Tyr) (with M-251) cross-link spans 96-225; that stretch reads WHAAGSYRVA…LAAVMMGLIY (130 aa). The active-site Proton acceptor is the His97. The segment at residues 225 to 251 is a cross-link (tryptophyl-tyrosyl-methioninium (Tyr-Met) (with W-96)); sequence YVNPEGVDGNPDPLKTAEDVRVTFARM. His266 is a heme b binding site.

This sequence belongs to the peroxidase family. Peroxidase/catalase subfamily. In terms of assembly, homodimer or homotetramer. It depends on heme b as a cofactor. Formation of the three residue Trp-Tyr-Met cross-link is important for the catalase, but not the peroxidase activity of the enzyme.

The enzyme catalyses H2O2 + AH2 = A + 2 H2O. The catalysed reaction is 2 H2O2 = O2 + 2 H2O. In terms of biological role, bifunctional enzyme with both catalase and broad-spectrum peroxidase activity. This Alkalilimnicola ehrlichii (strain ATCC BAA-1101 / DSM 17681 / MLHE-1) protein is Catalase-peroxidase.